Reading from the N-terminus, the 44-residue chain is MSQTMSKNNREAKEKKGQPEPLSGSHKVKNRNHSRQKHHAHHDM.

A disordered region spans residues 1-44 (MSQTMSKNNREAKEKKGQPEPLSGSHKVKNRNHSRQKHHAHHDM). Residues 8-18 (NNREAKEKKGQ) are compositionally biased toward basic and acidic residues. Over residues 26-44 (HKVKNRNHSRQKHHAHHDM) the composition is skewed to basic residues.

The protein belongs to the SspP family.

It is found in the spore core. This Bacillus cereus (strain ATCC 10987 / NRS 248) protein is Small, acid-soluble spore protein P.